Consider the following 341-residue polypeptide: Hygromycin-B 4-O-kinase (341 aa).

The active-site Proton acceptor is D198.

It belongs to the aminoglycoside phosphotransferase family.

The catalysed reaction is hygromycin B + ATP = 4-O-phosphohygromycin B + ADP + H(+). In terms of biological role, the aminoglycoside phosphotransferases achieve inactivation of their antibiotic substrates by phosphorylation. Only phosphorylates hygromycin and closely related compounds such as demethyl analogs and destomycin. The chain is Hygromycin-B 4-O-kinase (hph) from Escherichia coli.